The sequence spans 498 residues: Glycerol kinase (498 aa).

An ADP-binding site is contributed by T12. 3 residues coordinate ATP: T12, T13, and S14. Residue T12 participates in sn-glycerol 3-phosphate binding. Position 16 (R16) interacts with ADP. Residues R82, E83, Y134, and D243 each contribute to the sn-glycerol 3-phosphate site. Positions 82, 83, 134, 243, and 244 each coordinate glycerol. Residues T265 and G308 each coordinate ADP. 4 residues coordinate ATP: T265, G308, Q312, and G409. ADP is bound by residues G409 and N413.

It belongs to the FGGY kinase family.

The catalysed reaction is glycerol + ATP = sn-glycerol 3-phosphate + ADP + H(+). It participates in polyol metabolism; glycerol degradation via glycerol kinase pathway; sn-glycerol 3-phosphate from glycerol: step 1/1. Its activity is regulated as follows. Inhibited by fructose 1,6-bisphosphate (FBP). Functionally, key enzyme in the regulation of glycerol uptake and metabolism. Catalyzes the phosphorylation of glycerol to yield sn-glycerol 3-phosphate. This chain is Glycerol kinase, found in Petrotoga mobilis (strain DSM 10674 / SJ95).